A 436-amino-acid polypeptide reads, in one-letter code: Acetylcholine receptor non-alpha chain (436 aa).

At 1-195 (IIDVHEIDQI…IFYLELRRKP (195 aa)) the chain is on the extracellular side. Asn62 carries N-linked (GlcNAc...) asparagine glycosylation. Cysteines 89 and 103 form a disulfide. A glycan (N-linked (GlcNAc...) asparagine) is linked at Asn140. 3 helical membrane passes run 196–219 (LFYT…AFYL), 227–245 (VTLC…LLLK), and 261–280 (YLLF…VISL). At 281–404 (NLHFRRPSTH…WKFVARVLDR (124 aa)) the chain is on the cytoplasmic side. The helical transmembrane segment at 405 to 423 (LFLLLFSIACFLGTILILF) threads the bilayer.

It belongs to the ligand-gated ion channel (TC 1.A.9) family. Acetylcholine receptor (TC 1.A.9.1) subfamily.

The protein localises to the postsynaptic cell membrane. It localises to the cell membrane. After binding acetylcholine, the AChR responds by an extensive change in conformation that affects all subunits and leads to opening of an ion-conducting channel across the plasma membrane. This Onchocerca volvulus protein is Acetylcholine receptor non-alpha chain.